A 343-amino-acid polypeptide reads, in one-letter code: Anthranilate phosphoribosyltransferase (343 aa).

Residues Gly-78, 81–82, Thr-86, 88–91, 106–114, and Ser-118 each bind 5-phospho-alpha-D-ribose 1-diphosphate; these read GD, NIST, and KHGNRSVSS. Gly-78 lines the anthranilate pocket. Position 90 (Ser-90) interacts with Mg(2+). Asn-109 provides a ligand contact to anthranilate. Arg-164 serves as a coordination point for anthranilate. The Mg(2+) site is built by Asp-223 and Glu-224.

Belongs to the anthranilate phosphoribosyltransferase family. In terms of assembly, homodimer. Mg(2+) is required as a cofactor.

It carries out the reaction N-(5-phospho-beta-D-ribosyl)anthranilate + diphosphate = 5-phospho-alpha-D-ribose 1-diphosphate + anthranilate. It participates in amino-acid biosynthesis; L-tryptophan biosynthesis; L-tryptophan from chorismate: step 2/5. Catalyzes the transfer of the phosphoribosyl group of 5-phosphorylribose-1-pyrophosphate (PRPP) to anthranilate to yield N-(5'-phosphoribosyl)-anthranilate (PRA). The polypeptide is Anthranilate phosphoribosyltransferase (Chlamydia caviae (strain ATCC VR-813 / DSM 19441 / 03DC25 / GPIC) (Chlamydophila caviae)).